The chain runs to 441 residues: Chromosomal replication initiator protein DnaA (441 aa).

The tract at residues 1–71 (MDIRWEEILE…AVYQVVGDRF (71 aa)) is domain I, interacts with DnaA modulators. Positions 71-99 (FKVSILTESETSSHVLKEVIQSKFDDSDS) are domain II. A domain III, AAA+ region region spans residues 100 to 318 (DLNPEYIFSN…GIVNDLVMYK (219 aa)). ATP is bound by residues G143, G145, K146, and T147. Positions 319–441 (KAYEYFLLTE…HTIKHKISFQ (123 aa)) are domain IV, binds dsDNA.

It belongs to the DnaA family. In terms of assembly, oligomerizes as a right-handed, spiral filament on DNA at oriC.

It is found in the cytoplasm. Functionally, plays an essential role in the initiation and regulation of chromosomal replication. ATP-DnaA binds to the origin of replication (oriC) to initiate formation of the DNA replication initiation complex once per cell cycle. Binds the DnaA box (a 9 base pair repeat at the origin) and separates the double-stranded (ds)DNA. Forms a right-handed helical filament on oriC DNA; dsDNA binds to the exterior of the filament while single-stranded (ss)DNA is stabiized in the filament's interior. The ATP-DnaA-oriC complex binds and stabilizes one strand of the AT-rich DNA unwinding element (DUE), permitting loading of DNA polymerase. After initiation quickly degrades to an ADP-DnaA complex that is not apt for DNA replication. Binds acidic phospholipids. This chain is Chromosomal replication initiator protein DnaA, found in Leptospira biflexa serovar Patoc (strain Patoc 1 / Ames).